Reading from the N-terminus, the 701-residue chain is Elongation factor G 1 (701 aa).

In terms of domain architecture, tr-type G spans 8–290 (VRYRNIGICA…AVVEYLPAPT (283 aa)). GTP contacts are provided by residues 17–24 (AHVDAGKT), 88–92 (DTPGH), and 142–145 (NKMD).

The protein belongs to the TRAFAC class translation factor GTPase superfamily. Classic translation factor GTPase family. EF-G/EF-2 subfamily.

The protein localises to the cytoplasm. Catalyzes the GTP-dependent ribosomal translocation step during translation elongation. During this step, the ribosome changes from the pre-translocational (PRE) to the post-translocational (POST) state as the newly formed A-site-bound peptidyl-tRNA and P-site-bound deacylated tRNA move to the P and E sites, respectively. Catalyzes the coordinated movement of the two tRNA molecules, the mRNA and conformational changes in the ribosome. The chain is Elongation factor G 1 from Saccharophagus degradans (strain 2-40 / ATCC 43961 / DSM 17024).